The chain runs to 333 residues: Trimethylamine N-oxide-binding protein (333 aa).

A signal peptide spans 1–42 (MRLFREIAANDPGPTGRMKNMKTFTTALATGVLALCPLAALA). Trimethylamine N-oxide contacts are provided by tryptophan 55, tryptophan 102, glutamate 131, tryptophan 177, and tryptophan 222. Proline 249, valine 251, asparagine 254, alanine 257, and aspartate 260 together coordinate Ca(2+).

As to quaternary structure, the complex is probably composed of two ATP-binding proteins (TmoW), two transmembrane proteins (TmoV) and a solute-binding protein (TmoX). Monomer in solution, but forms homodimers in crystals.

The protein resides in the periplasm. With respect to regulation, binds a Ca(2+) ion, which has little effect on either the binding affinity or the secondary structure, but plays an important role in maintaining the stability of TmoX. It may modulate the protein stability in response to biological needs and environmental changes. Thermostability is dramatically decreased when Ca(2+) is removed by EDTA. Its function is as follows. Part of the ABC transporter complex TmoXWV involved in trimethylamine N-oxide (TMAO) import. Is specific for TMAO and essential for TMAO metabolism. Binds TMAO with high affinity. In vitro, also presents a high binding affinity for choline, however this transporter seems specific for TMAO and the choline-binding affinity presented by recombinant TmoX may not make physiological sense. The polypeptide is Trimethylamine N-oxide-binding protein (Ruegeria pomeroyi (strain ATCC 700808 / DSM 15171 / DSS-3) (Silicibacter pomeroyi)).